Here is an 81-residue protein sequence, read N- to C-terminus: uncharacterized protein (81 aa).

This is an uncharacterized protein from Archaeoglobus fulgidus (strain ATCC 49558 / DSM 4304 / JCM 9628 / NBRC 100126 / VC-16).